A 191-amino-acid chain; its full sequence is Protein GrpE (191 aa).

Basic and acidic residues-rich tracts occupy residues 1–19 (MKDE…EPES) and 29–45 (QQGE…GEIK). Residues 1-45 (MKDEHNQEHDHLSPKEPESYQKAYACKEQQGEEKQEASEKEGEIK) are disordered.

This sequence belongs to the GrpE family. In terms of assembly, homodimer.

Its subcellular location is the cytoplasm. Its function is as follows. Participates actively in the response to hyperosmotic and heat shock by preventing the aggregation of stress-denatured proteins, in association with DnaK and GrpE. It is the nucleotide exchange factor for DnaK and may function as a thermosensor. Unfolded proteins bind initially to DnaJ; upon interaction with the DnaJ-bound protein, DnaK hydrolyzes its bound ATP, resulting in the formation of a stable complex. GrpE releases ADP from DnaK; ATP binding to DnaK triggers the release of the substrate protein, thus completing the reaction cycle. Several rounds of ATP-dependent interactions between DnaJ, DnaK and GrpE are required for fully efficient folding. The protein is Protein GrpE of Helicobacter pylori (strain J99 / ATCC 700824) (Campylobacter pylori J99).